The primary structure comprises 515 residues: 2-isopropylmalate synthase (515 aa).

The 263-residue stretch at 5–267 folds into the Pyruvate carboxyltransferase domain; sequence VIIFDTTLRD…DTRINTQEIH (263 aa). Asp14, His202, His204, and Asn238 together coordinate Mn(2+). A regulatory domain region spans residues 392-515; the sequence is VLDKLSAHST…VADIKNHKHH (124 aa).

It belongs to the alpha-IPM synthase/homocitrate synthase family. LeuA type 1 subfamily. As to quaternary structure, homodimer. Mn(2+) is required as a cofactor.

Its subcellular location is the cytoplasm. It catalyses the reaction 3-methyl-2-oxobutanoate + acetyl-CoA + H2O = (2S)-2-isopropylmalate + CoA + H(+). Its pathway is amino-acid biosynthesis; L-leucine biosynthesis; L-leucine from 3-methyl-2-oxobutanoate: step 1/4. Catalyzes the condensation of the acetyl group of acetyl-CoA with 3-methyl-2-oxobutanoate (2-ketoisovalerate) to form 3-carboxy-3-hydroxy-4-methylpentanoate (2-isopropylmalate). This is 2-isopropylmalate synthase from Haemophilus influenzae (strain PittEE).